A 3902-amino-acid chain; its full sequence is Hybrid PKS-NRPS synthetase pynA (3902 aa).

Residues 1–25 (MDTPLSSSEISPRFSNTVPSSVSSM) form a disordered region. The region spanning 29–441 (ADPSVIVGLA…GTNAHVILDA (413 aa)) is the Ketosynthase family 3 (KS3) domain. Residues Cys-201, His-324, and His-362 each act as for beta-ketoacyl synthase activity in the active site. The segment at 555-868 (VFTGQGAQWF…PYLASLTRGV (314 aa)) is malonyl-CoA:ACP transacylase (MAT) domain. Residue Ser-647 is the For malonyltransferase activity of the active site. The segment at 945 to 1080 (HSILGARMPG…GLVSVETNAL (136 aa)) is N-terminal hotdog fold. Residues 945–1256 (HSILGARMPG…LEVTALGSDK (312 aa)) form a dehydratase (DH) domain region. In terms of domain architecture, PKS/mFAS DH spans 945-1258 (HSILGARMPG…VTALGSDKTD (314 aa)). The active-site Proton acceptor; for dehydratase activity is the His-977. Residues 1100–1258 (QESIPAETLY…VTALGSDKTD (159 aa)) are C-terminal hotdog fold. Asp-1164 functions as the Proton donor; for dehydratase activity in the catalytic mechanism. The enoyl reductase (ER) domain stretch occupies residues 1629–1945 (GLLETLVFED…MGKHTGKVVL (317 aa)). A ketoreductase (KR) domain region spans residues 1971-2143 (TYLLVGGLGG…AGTTMNCGMI (173 aa)). In terms of domain architecture, Carrier 1 spans 2251–2328 (ERTTLVLSAF…ALVTKASGLI (78 aa)). An O-(pantetheine 4'-phosphoryl)serine modification is found at Ser-2288. The segment covering 2337-2350 (KAENVDNEGAKGNE) has biased composition (basic and acidic residues). Residues 2337–2364 (KAENVDNEGAKGNEDQEVETQQGQLNQP) form a disordered region. Residues 2374-2816 (VPMSSFQQRL…AEVNLCGALE (443 aa)) are condensation (C) domain 7. Residues 2836–3248 (SVGVCQRIME…NGLLTFKGRI (413 aa)) are adenylation (A) domain 8. In terms of domain architecture, Carrier 2 spans 3391–3467 (GDDAEILQGV…AIAGMIQKQL (77 aa)). Ser-3427 bears the O-(pantetheine 4'-phosphoryl)serine mark. The segment at 3515 to 3774 (LTGIDTFIGL…VDFLPVDALT (260 aa)) is thioesterase (TE) domain.

It in the C-terminal section; belongs to the NRP synthetase family.

It participates in secondary metabolite biosynthesis. Functionally, hybrid PKS-NRPS synthetase; part of the gene cluster that mediates the biosynthesis of pyranonigrins, a family of antioxidative compounds. The first step of pyranonigrins biosynthesis is performed by the hybrid PKS-NRPS synthetase that condenses 6 malonyl-CoA units to an acetyl starter unit, to form a 1,3,5-trioxotetradecane-6,8-dienyl-ACP. The enoyl reductase (ER) domain of pynA is likely to be functional during the first two rounds of polyketide chain extension, to generate the saturated C-C bonds of the alkyl side chain. PynA subsequently forms the amide bond between the acyl chain and L-serine. Although pynA has a terminal reductase domain, it appears to require the thioesterase pynI for the release of the straight-chain intermediate from pynA via the formation of a tetramic acid pyranonigrin J. The methyltransferase pynC then coverts pyranonigrin J to pyranonigrin I via N-methylation. The FAD-dependent monooxygenase pynG catalyzes an epoxidation-mediated cyclization to form the dihydro-gamma-pyrone moiety, followed by pynD-catalyzed oxidation of the alcohol to the ketone and enolization to yield the characteristic tetramic acid-fused gamma-pyrone core of pyranonigrin H. Pyranonigrin H is substrate of pynH for dehydration-mediated exo-methylene formation from the serine side chain to produce pyranonigrin E, before the oxidase pynE reduces the exo-methylene of pyranonigrin E into a pendant methyl to form pyranonigrin G. The FAD-linked oxidoreductase pynB performs the reverse reaction and converts pyranonigrin G back to pyranonigrin E. This chain is Hybrid PKS-NRPS synthetase pynA, found in Aspergillus niger (strain ATCC MYA-4892 / CBS 513.88 / FGSC A1513).